Here is a 607-residue protein sequence, read N- to C-terminus: Major facilitator superfamily multidrug transporter mdrA (607 aa).

The next 12 helical transmembrane spans lie at 77–97 (MTVA…TGGV), 110–130 (VATL…LLWA), 139–159 (QIIF…SAGA), 170–190 (FFAG…IADM), 202–222 (LFAA…GFLG), 229–249 (WVMG…TIFV), 305–325 (PIVF…YMLF), 342–362 (VSSL…TYSV), 385–405 (LPPT…FAWT), 413–433 (IVCI…FLGI), 443–463 (IFAA…GAVF), and 478–498 (WASS…FLFY). Positions 523–583 (EQMKQAPEPE…ASTRTASSLR (61 aa)) are disordered. The span at 553–564 (DVSETESNVEEL) shows a compositional bias: acidic residues. Over residues 572 to 583 (SRASTRTASSLR) the composition is skewed to low complexity.

It belongs to the major facilitator superfamily. DHA1 family. Polyamines/proton antiporter (TC 2.A.1.2.16) subfamily.

The protein resides in the cell membrane. In terms of biological role, MFS transporter involved in the basal level of azole susceptibility. Confers resistance to voriconazole and, to a lesser extent, to fluconazole. This Aspergillus fumigatus (strain ATCC MYA-4609 / CBS 101355 / FGSC A1100 / Af293) (Neosartorya fumigata) protein is Major facilitator superfamily multidrug transporter mdrA.